We begin with the raw amino-acid sequence, 239 residues long: Methylthioribulose-1-phosphate dehydratase (239 aa).

Substrate is bound at residue cysteine 94. Zn(2+) contacts are provided by histidine 112 and histidine 114. Residue glutamate 136 is the Proton donor/acceptor of the active site. Histidine 192 provides a ligand contact to Zn(2+).

This sequence belongs to the aldolase class II family. MtnB subfamily. It depends on Zn(2+) as a cofactor.

It localises to the cytoplasm. It catalyses the reaction 5-(methylsulfanyl)-D-ribulose 1-phosphate = 5-methylsulfanyl-2,3-dioxopentyl phosphate + H2O. Its pathway is amino-acid biosynthesis; L-methionine biosynthesis via salvage pathway; L-methionine from S-methyl-5-thio-alpha-D-ribose 1-phosphate: step 2/6. Catalyzes the dehydration of methylthioribulose-1-phosphate (MTRu-1-P) into 2,3-diketo-5-methylthiopentyl-1-phosphate (DK-MTP-1-P). Functions in the methionine salvage pathway. May play a role in apoptosis. The chain is Methylthioribulose-1-phosphate dehydratase from Xenopus laevis (African clawed frog).